The sequence spans 578 residues: Isocitrate dehydrogenase kinase/phosphatase (578 aa).

Residues 315 to 321 (APGIRGM) and Lys-336 each bind ATP. The active site involves Asp-371.

The protein belongs to the AceK family.

The protein localises to the cytoplasm. The enzyme catalyses L-seryl-[isocitrate dehydrogenase] + ATP = O-phospho-L-seryl-[isocitrate dehydrogenase] + ADP + H(+). Bifunctional enzyme which can phosphorylate or dephosphorylate isocitrate dehydrogenase (IDH) on a specific serine residue. This is a regulatory mechanism which enables bacteria to bypass the Krebs cycle via the glyoxylate shunt in response to the source of carbon. When bacteria are grown on glucose, IDH is fully active and unphosphorylated, but when grown on acetate or ethanol, the activity of IDH declines drastically concomitant with its phosphorylation. This is Isocitrate dehydrogenase kinase/phosphatase from Escherichia coli O157:H7.